The chain runs to 153 residues: Glucose-6-phosphate 1-dehydrogenase (153 aa).

Residues R21 and K120 each coordinate NADP(+). K120 contributes to the D-glucose 6-phosphate binding site.

Belongs to the glucose-6-phosphate dehydrogenase family.

The protein localises to the cytoplasm. It localises to the cytosol. The enzyme catalyses D-glucose 6-phosphate + NADP(+) = 6-phospho-D-glucono-1,5-lactone + NADPH + H(+). The protein operates within carbohydrate degradation; pentose phosphate pathway; D-ribulose 5-phosphate from D-glucose 6-phosphate (oxidative stage): step 1/3. Cytosolic glucose-6-phosphate dehydrogenase that catalyzes the first and rate-limiting step of the oxidative branch within the pentose phosphate pathway/shunt, an alternative route to glycolysis for the dissimilation of carbohydrates and a major source of reducing power and metabolic intermediates for fatty acid and nucleic acid biosynthetic processes. The chain is Glucose-6-phosphate 1-dehydrogenase (Zw) from Drosophila simulans (Fruit fly).